A 2548-amino-acid chain; its full sequence is Unconventional myosin-IXa (2548 aa).

One can recognise a Ras-associating domain in the interval 14 to 112 (NEHTLRIYPG…YRFLLREKNL (99 aa)). The Myosin motor domain maps to 146–1016 (KDFDDLCSLP…ERQHLQDLLH (871 aa)). Residues 175-195 (IYTYVGSILIVINPFKFLPIY) traverse the membrane as a helical segment. Residue 239–246 (GESGSGKT) participates in ATP binding. Phosphoserine is present on Ser755. The segment at 898–920 (LSKLMETLGQAEPYFVKCIRSNA) is actin-binding. 5 IQ domains span residues 1021–1041 (RRII…HFLH), 1042–1071 (LRQA…QKDA), 1074–1103 (MASA…AAIV), 1115–1144 (RHMA…KIIL), and 1138–1167 (QRKK…QRLR). The interval 1021–1162 (RRIILLQRWF…RARQRFKALK (142 aa)) is neck or regulatory domain. The interval 1163–2511 (EQRLRETKPE…LKNVKNSPQK (1349 aa)) is tail. A compositionally biased stretch (basic and acidic residues) spans 1223–1236 (SVDCLKESPNKQQE). Residues 1223–1250 (SVDCLKESPNKQQERAQSQSGVDLQEDV) form a disordered region. Residues Ser1242 and Ser1258 each carry the phosphoserine modification. A coiled-coil region spans residues 1264 to 1291 (QKKVGRAKRESRRMRELEQAIFSLELLK). A phosphoserine mark is found at Ser1299 and Ser1317. Residues 1299-1386 (SPSEDRRWST…SNETSSAEHL (88 aa)) are disordered. 2 stretches are compositionally biased toward low complexity: residues 1324–1337 (SESS…LSYE) and 1356–1366 (FPSPKISSSPK). Ser1364 carries the post-translational modification Phosphoserine. The segment covering 1372-1381 (NALSASNETS) has biased composition (polar residues). Residues 1486–1532 (VLKKLEKLNTEKEERQKQLQQQNEKEMMEQIRQQTDILEKERKAFKT) adopt a coiled-coil conformation. A disordered region spans residues 1804-1836 (YHPTPPLSPELPGSCRKEFKENKEPSPKAKRKR). Residues 1818–1830 (CRKEFKENKEPSP) are compositionally biased toward basic and acidic residues. Ser1948 bears the Phosphoserine mark. 2 Phorbol-ester/DAG-type zinc fingers span residues 1999-2048 (GHIF…TAKC) and 2068-2119 (LTSE…DAES). Positions 2063 to 2251 (VELSRLTSED…LIVVEQMNKY (189 aa)) constitute a Rho-GAP domain. Residue Ser2294 is modified to Phosphoserine. Residues 2315 to 2358 (AAMETDITEQQQAAMQQEERVLTEQIENLQKEKEELTFEMLVLE) adopt a coiled-coil conformation. Disordered stretches follow at residues 2359–2383 (PRAS…ENLN) and 2401–2424 (SSLK…KQQD). Ser2464 is modified (phosphoserine). The disordered stretch occupies residues 2490–2531 (RGTFNPEKGKQKLKNVKNSPQKTKETPEGTVMSGRRKTVDPD).

It belongs to the TRAFAC class myosin-kinesin ATPase superfamily. Myosin family. Phosphorylated by ALPK1 following monosodium urate monohydrate (MSU)-induced inflammation. In terms of tissue distribution, found to be expressed in testis and placenta and at lower levels in all the examined tissues with the exception of liver. Isoform 5: Found in leukocytes but not in brain, retina or testis.

The protein localises to the membrane. Its subcellular location is the cytoplasm. The protein resides in the synapse. It is found in the cell projection. It localises to the growth cone. Functionally, myosins are actin-based motor molecules with ATPase activity. Unconventional myosins serve in intracellular movements. Regulates Rho by stimulating it's GTPase activity in neurons. Required for the regulation of neurite branching and motor neuron axon guidance. The polypeptide is Unconventional myosin-IXa (MYO9A) (Homo sapiens (Human)).